The primary structure comprises 179 residues: ECF RNA polymerase sigma factor SigF (179 aa).

The sigma-70 factor domain-2 stretch occupies residues 33–93 (RLRAYFMRRM…KLIDHWRRRK (61 aa)). The short motif at 51–64 (DLVQETLLAVHLKR) is the Polymerase core binding element. The tract at residues 123–170 (ALASLPQRQRMLVSDVKLTGLSLAEAGARAGISEGAAKVALHRALKAL) is sigma-70 factor domain-4. Residues 145–164 (LAEAGARAGISEGAAKVALH) constitute a DNA-binding region (H-T-H motif).

This sequence belongs to the sigma-70 factor family. ECF subfamily.

The protein localises to the cytoplasm. Sigma factors are initiation factors that promote the attachment of RNA polymerase to specific initiation sites and are then released. Extracytoplasmic function (ECF) sigma factors are held in an inactive form by a cognate anti-sigma factor (NrsF in this case) until they are released. Up-regulates expression of 4 operons (sigF-nrsF, CCNA_02834, CCNA_03001 to CCNA_02999 and CCNA_03363 to CCNA_03366) in response to potassium dichromate (K(2)Cr(2)O(7)) or cadmium chloride (CdCl(2)). Overexpression of sigF leads to higher expression of its regulon. The polypeptide is ECF RNA polymerase sigma factor SigF (Caulobacter vibrioides (strain NA1000 / CB15N) (Caulobacter crescentus)).